A 1163-amino-acid chain; its full sequence is Pesticidal crystal protein Cry26Aa (1163 aa).

The protein belongs to the delta endotoxin family.

In terms of biological role, promotes colloidosmotic lysis by binding to the midgut epithelial cells of insects. In Bacillus thuringiensis subsp. finitimus, this protein is Pesticidal crystal protein Cry26Aa (cry26Aa).